A 583-amino-acid polypeptide reads, in one-letter code: Undecaprenyl phosphate-alpha-4-amino-4-deoxy-L-arabinose arabinosyl transferase 2 (583 aa).

A disordered region spans residues 1–20 (MTSRIQMHRTSPPPAYGTSA). Transmembrane regions (helical) follow at residues 42–62 (LLLV…GLWI), 113–135 (LFGV…YLIT), 145–165 (SFAA…AGYS), 166–186 (NLDP…WFAL), 209–229 (FMTK…PYMI), 241–261 (GLVA…SIHA), 290–310 (WWFY…LLPG), 321–341 (QAPT…FSLS), 345–365 (LPTY…SALI), 380–400 (SLLN…IQLT), 409–429 (MLGL…NLLP), and 440–460 (PALG…GFIV).

The protein belongs to the glycosyltransferase 83 family.

The protein resides in the cell inner membrane. It carries out the reaction 4-amino-4-deoxy-alpha-L-arabinopyranosyl di-trans,octa-cis-undecaprenyl phosphate + lipid IVA = lipid IIA + di-trans,octa-cis-undecaprenyl phosphate.. Its pathway is lipopolysaccharide metabolism; 4-amino-4-deoxy-beta-L-arabinose-lipid A biosynthesis. Functionally, catalyzes the transfer of the L-Ara4N moiety of the glycolipid undecaprenyl phosphate-alpha-L-Ara4N to lipid A. The modified arabinose is attached to lipid A and is required for resistance to polymyxin and cationic antimicrobial peptides. This is Undecaprenyl phosphate-alpha-4-amino-4-deoxy-L-arabinose arabinosyl transferase 2 from Pseudomonas fluorescens (strain ATCC BAA-477 / NRRL B-23932 / Pf-5).